The chain runs to 215 residues: Cytochrome b6 (215 aa).

The helical transmembrane segment at 32–52 threads the bilayer; sequence IFYCIGGITFTCFLVQVATGF. Heme c is bound at residue Cys35. Residues His86 and His100 each coordinate heme b. The next 3 membrane-spanning stretches (helical) occupy residues 90–110, 116–136, and 186–206; these read ASMM…TGGF, LTWV…VTGY, and LHTF…FLMI. Residues His187 and His202 each contribute to the heme b site.

The protein belongs to the cytochrome b family. PetB subfamily. The 4 large subunits of the cytochrome b6-f complex are cytochrome b6, subunit IV (17 kDa polypeptide, PetD), cytochrome f and the Rieske protein, while the 4 small subunits are PetG, PetL, PetM and PetN. The complex functions as a dimer. The cofactor is heme b. Requires heme c as cofactor.

The protein resides in the plastid. Its subcellular location is the chloroplast thylakoid membrane. Component of the cytochrome b6-f complex, which mediates electron transfer between photosystem II (PSII) and photosystem I (PSI), cyclic electron flow around PSI, and state transitions. In Chlorella vulgaris (Green alga), this protein is Cytochrome b6.